The chain runs to 410 residues: Mating-type locus allele B1 protein (410 aa).

The variable domain between B alleles stretch occupies residues 1–110 (MSSDPNFSLI…FNVVSPDVGC (110 aa)). A DNA-binding region (homeobox; TALE-type) is located at residues 107–184 (DVGCRNLSED…NARRRSGWSH (78 aa)). Positions 111 to 410 (RNLSEDLPAY…PFLCLSVAFV (300 aa)) are highly conserved between B alleles. Disordered stretches follow at residues 202-239 (RAKLSSSNQSTPPSSTSDSLSNNLDDVLSDNLGRPLTP), 278-335 (TPKP…TPEL), and 374-395 (ARGNRKVKALPKRAGKQQPDEV). Positions 205-233 (LSSSNQSTPPSSTSDSLSNNLDDVLSDNL) are enriched in low complexity. A Nuclear localization signal motif is present at residues 276 to 308 (KKTPKPGMPRPVTTVAKRHPARKTKPAAKPKSR). A compositionally biased stretch (basic residues) spans 291–307 (AKRHPARKTKPAAKPKS). Over residues 312–335 (PRASTTPSIDSTLDSSKLESTPEL) the composition is skewed to polar residues. Residues 333-410 (PELSMCSTAD…PFLCLSVAFV (78 aa)) are not essential for B1 function. Residues 375-388 (RGNRKVKALPKRAG) are compositionally biased toward basic residues.

The protein belongs to the TALE/M-ATYP homeobox family.

The protein resides in the nucleus. Functionally, the B locus has at least 25 alleles, and any combination of two different B alleles yields a multimeric regulatory protein, that activates genes responsible for the pathogenicity and for the sexual development of the fungus within the corn plant. This is Mating-type locus allele B1 protein from Mycosarcoma maydis (Corn smut fungus).